The chain runs to 224 residues: Uracil-DNA glycosylase 2 (224 aa).

Residue Asp64 is the Proton acceptor of the active site.

The protein belongs to the uracil-DNA glycosylase (UDG) superfamily. UNG family.

It is found in the cytoplasm. The enzyme catalyses Hydrolyzes single-stranded DNA or mismatched double-stranded DNA and polynucleotides, releasing free uracil.. In terms of biological role, excises uracil residues from the DNA which can arise as a result of misincorporation of dUMP residues by DNA polymerase or due to deamination of cytosine. The protein is Uracil-DNA glycosylase 2 of Listeria monocytogenes serotype 4b (strain F2365).